We begin with the raw amino-acid sequence, 568 residues long: MDSSTSLLPPLGSIILACEGLTSLVPLILSVMVCLIATVTISPTLLAYFNDPFELRAYPGPFLARFTSAWISWIISQNRWSETVDLMHRQHGPIVRLSPDHVSVASPAAFAAVYGHSSGALKAPFYNAFANFKIRSIFNTRDRAEHSRKRRVEAHMFSPRSIRALEDTARVHFQVLVRQWDALCAPTGKTVRGSAEGTLGTISWKVHGDRVWFDCMPWFNFWSFDTISDLAFGRPFGMLEAAKGSAHVSKSNTKSVQAVSQDTSHSNEAQSELLEIPAMEVLSELLDFTVALAYLPAWVQPVFGRLPMFRDGYDAAPKLANLSLTAVANRVASQTDRADMLSELLRGRDEEGKPYGLEELSTEAELLIIAGGDTTANTSCATAYYIARDLQIQAKLQAELDVALDGVESDVAPYDAVKDLPYLDAVINEGLRLHSTIGAGLPRVVPSGGMTVLGQHLKEGTVVSSPIYTLHRNEAVWGKNAYEFYPERWLEASADAKKEMMQSFAPFSVGPRACLGRSLALQQLHILLATIFHRYSLVLENNAPAQLPLRDGFARKPMKCIVGVQRRK.

A helical transmembrane segment spans residues 21 to 41 (LTSLVPLILSVMVCLIATVTI). Asn321 and Asn377 each carry an N-linked (GlcNAc...) asparagine glycan. Cys514 provides a ligand contact to heme.

It belongs to the cytochrome P450 family. Heme serves as cofactor.

It localises to the membrane. It participates in secondary metabolite biosynthesis. In terms of biological role, cytochrome P450 monooxygenase that is able to use 3,5-dimethoxy-trans-stilbene and 3,5,4'-trimethoxy-trans-stilbene as substrates for oxidation. The protein is Cytochrome P450 monooxygenase 41 of Postia placenta (strain ATCC 44394 / Madison 698-R) (Brown rot fungus).